A 1407-amino-acid chain; its full sequence is DNA-directed RNA polymerase subunit beta' (1407 aa).

Zn(2+) is bound by residues C70, C72, C85, and C88. Mg(2+)-binding residues include D460, D462, and D464. Zn(2+) contacts are provided by C814, C888, C895, and C898.

This sequence belongs to the RNA polymerase beta' chain family. In terms of assembly, the RNAP catalytic core consists of 2 alpha, 1 beta, 1 beta' and 1 omega subunit. When a sigma factor is associated with the core the holoenzyme is formed, which can initiate transcription. Requires Mg(2+) as cofactor. The cofactor is Zn(2+).

It catalyses the reaction RNA(n) + a ribonucleoside 5'-triphosphate = RNA(n+1) + diphosphate. DNA-dependent RNA polymerase catalyzes the transcription of DNA into RNA using the four ribonucleoside triphosphates as substrates. This is DNA-directed RNA polymerase subunit beta' from Salmonella paratyphi A (strain ATCC 9150 / SARB42).